A 1470-amino-acid polypeptide reads, in one-letter code: Actin cytoskeleton-regulatory complex protein pan1 (1470 aa).

Positions methionine 1–isoleucine 157 are disordered. Positions glutamine 25–proline 48 are enriched in low complexity. Over residues glutamine 54–phenylalanine 75 the composition is skewed to polar residues. Over residues glycine 77–glutamine 101 the composition is skewed to low complexity. Residues arginine 129–serine 139 are compositionally biased toward polar residues. The EH 1 domain maps to aspartate 169 to methionine 257. The 36-residue stretch at leucine 201–arginine 236 folds into the EF-hand 1 domain. Disordered regions lie at residues aspartate 282 to asparagine 305 and glutamine 343 to proline 377. The segment covering proline 292–glutamine 301 has biased composition (pro residues). The segment covering proline 348–proline 360 has biased composition (low complexity). Positions glutamate 458–asparagine 547 constitute an EH 2 domain. Residues leucine 491 to lysine 526 form the EF-hand 2 domain. Disordered regions lie at residues glycine 614–glutamate 641, glutamate 794–arginine 864, glycine 886–lysine 1087, and glutamate 1099–aspartate 1470. A compositionally biased stretch (low complexity) spans alanine 627 to alanine 637. The stretch at alanine 633–histidine 758 forms a coiled coil. Basic and acidic residues-rich tracts occupy residues alanine 809–arginine 864 and valine 892–proline 910. The segment covering leucine 917 to serine 932 has biased composition (low complexity). Basic and acidic residues-rich tracts occupy residues threonine 933 to glutamate 951, arginine 971 to arginine 1006, alanine 1052 to lysine 1087, glutamate 1099 to alanine 1127, and alanine 1134 to leucine 1146. Residues aspartate 963–serine 1159 are a coiled coil. Over residues glutamate 1151–glycine 1163 the composition is skewed to acidic residues. Residues proline 1169–leucine 1180 are compositionally biased toward polar residues. Low complexity predominate over residues proline 1181–glutamate 1195. The segment covering proline 1243–proline 1269 has biased composition (polar residues). Basic and acidic residues predominate over residues leucine 1277–glutamate 1286. The segment covering serine 1340 to threonine 1352 has biased composition (polar residues). Composition is skewed to pro residues over residues alanine 1367–alanine 1380 and alanine 1389–alanine 1433. Residues aspartate 1437–valine 1454 form the WH2 domain. Polar residues predominate over residues asparagine 1457–aspartate 1470.

The protein belongs to the PAN1 family. Component of the PAN1 actin cytoskeleton-regulatory complex.

The protein localises to the cell membrane. It localises to the endosome membrane. Its subcellular location is the cytoplasm. The protein resides in the cytoskeleton. It is found in the actin patch. Its function is as follows. Component of the PAN1 actin cytoskeleton-regulatory complex required for the internalization of endosomes during actin-coupled endocytosis. The complex links the site of endocytosis to the cell membrane-associated actin cytoskeleton. Mediates uptake of external molecules and vacuolar degradation of plasma membrane proteins. Plays a role in the proper organization of the cell membrane-associated actin cytoskeleton and promotes its destabilization. This Neosartorya fischeri (strain ATCC 1020 / DSM 3700 / CBS 544.65 / FGSC A1164 / JCM 1740 / NRRL 181 / WB 181) (Aspergillus fischerianus) protein is Actin cytoskeleton-regulatory complex protein pan1 (pan1).